Consider the following 317-residue polypeptide: Ribosomal protein L11 methyltransferase (317 aa).

T158, G179, D201, and N244 together coordinate S-adenosyl-L-methionine.

The protein belongs to the methyltransferase superfamily. PrmA family.

It is found in the cytoplasm. The catalysed reaction is L-lysyl-[protein] + 3 S-adenosyl-L-methionine = N(6),N(6),N(6)-trimethyl-L-lysyl-[protein] + 3 S-adenosyl-L-homocysteine + 3 H(+). Its function is as follows. Methylates ribosomal protein L11. The protein is Ribosomal protein L11 methyltransferase of Streptococcus agalactiae serotype Ia (strain ATCC 27591 / A909 / CDC SS700).